The primary structure comprises 485 residues: 2-succinylbenzoate--CoA ligase (485 aa).

This sequence belongs to the ATP-dependent AMP-binding enzyme family. MenE subfamily.

It catalyses the reaction 2-succinylbenzoate + ATP + CoA = 2-succinylbenzoyl-CoA + AMP + diphosphate. It participates in quinol/quinone metabolism; 1,4-dihydroxy-2-naphthoate biosynthesis; 1,4-dihydroxy-2-naphthoate from chorismate: step 5/7. It functions in the pathway quinol/quinone metabolism; menaquinone biosynthesis. Functionally, converts 2-succinylbenzoate (OSB) to 2-succinylbenzoyl-CoA (OSB-CoA). This Enterococcus faecalis (strain ATCC 700802 / V583) protein is 2-succinylbenzoate--CoA ligase.